The following is a 749-amino-acid chain: Putative Xaa-Pro aminopeptidase FRA1 (749 aa).

The interval 1 to 33 (MTSKPSTSDGRAHSISHVPGTHMRGTSASHSPR) is disordered. Phosphoserine occurs at positions 69, 92, and 95. Mn(2+)-binding residues include D551, D562, E660, and E674.

This sequence belongs to the peptidase M24B family. In terms of assembly, homodimer. Interacts with FRA2. The cofactor is Mn(2+).

The protein localises to the cytoplasm. It catalyses the reaction Release of any N-terminal amino acid, including proline, that is linked to proline, even from a dipeptide or tripeptide.. Involved in the regulation of the iron regulon in responss to decreased mitochondrial iron-sulfur cluster synthesis. This is Putative Xaa-Pro aminopeptidase FRA1 (FRA1) from Saccharomyces cerevisiae (strain ATCC 204508 / S288c) (Baker's yeast).